Reading from the N-terminus, the 412-residue chain is Multifunctional CCA protein (412 aa).

ATP is bound by residues glycine 8 and arginine 11. The CTP site is built by glycine 8 and arginine 11. The Mg(2+) site is built by aspartate 21 and aspartate 23. The ATP site is built by arginine 91, arginine 137, and arginine 140. Arginine 91, arginine 137, and arginine 140 together coordinate CTP. The 102-residue stretch at 225–326 folds into the HD domain; the sequence is TGIHVMMVID…ADMLQATDAY (102 aa).

The protein belongs to the tRNA nucleotidyltransferase/poly(A) polymerase family. Bacterial CCA-adding enzyme type 1 subfamily. Monomer. Can also form homodimers and oligomers. It depends on Mg(2+) as a cofactor. The cofactor is Ni(2+).

The catalysed reaction is a tRNA precursor + 2 CTP + ATP = a tRNA with a 3' CCA end + 3 diphosphate. It carries out the reaction a tRNA with a 3' CCA end + 2 CTP + ATP = a tRNA with a 3' CCACCA end + 3 diphosphate. Functionally, catalyzes the addition and repair of the essential 3'-terminal CCA sequence in tRNAs without using a nucleic acid template. Adds these three nucleotides in the order of C, C, and A to the tRNA nucleotide-73, using CTP and ATP as substrates and producing inorganic pyrophosphate. tRNA 3'-terminal CCA addition is required both for tRNA processing and repair. Also involved in tRNA surveillance by mediating tandem CCA addition to generate a CCACCA at the 3' terminus of unstable tRNAs. While stable tRNAs receive only 3'-terminal CCA, unstable tRNAs are marked with CCACCA and rapidly degraded. The protein is Multifunctional CCA protein of Nitrosomonas europaea (strain ATCC 19718 / CIP 103999 / KCTC 2705 / NBRC 14298).